The primary structure comprises 574 residues: Excitatory amino acid transporter 2 (574 aa).

Residues 1–44 are Cytoplasmic-facing; it reads MASTEGANNMPKQVEVRMHDSHLGSEEPKHRHLGLRLCDKLGKN. Phosphoserine is present on residues Ser-3, Ser-21, and Ser-25. Cys-38 is lipidated: S-palmitoyl cysteine. A helical transmembrane segment spans residues 45–64; the sequence is LLLTLTVFGVILGAVCGGLL. Over 65-87 the chain is Extracellular; the sequence is RLASPIHPDVVMLIAFPGDILMR. Residues 88 to 108 form a helical membrane-spanning segment; sequence MLKMLILPLIISSLITGLSGL. Topologically, residues 109–120 are cytoplasmic; that stretch reads DAKASGRLGTRA. Residues 121–142 form a helical membrane-spanning segment; the sequence is MVYYMSTTIIAAVLGVILVLAI. Residues 143–235 lie on the Extracellular side of the membrane; that stretch reads HPGNPKLKKQ…TKMVIKKGLE (93 aa). N-linked (GlcNAc...) asparagine glycosylation is found at Asn-206 and Asn-216. A helical transmembrane segment spans residues 236-259; that stretch reads FKDGMNVLGLIGFFIAFGIAMGKM. At 260–268 the chain is on the cytoplasmic side; it reads GDQAKLMVD. The helical transmembrane segment at 269–296 threads the bilayer; that stretch reads FFNILNEIVMKLVIMIMWYSPLGIACLI. Over 297-317 the chain is Extracellular; the sequence is CGKIIAIKDLEVVARQLGMYM. A helical membrane pass occupies residues 318–339; it reads VTVIIGLIIHGGIFLPLIYFVV. Topologically, residues 340 to 344 are cytoplasmic; that stretch reads TRKNP. An intramembrane region (discontinuously helical) is located at residues 345 to 375; it reads FSFFAGIFQAWITALGTASSAGTLPVTFRCL. Residue 362–364 participates in L-aspartate binding; sequence ASS. The Cytoplasmic portion of the chain corresponds to 376 to 384; that stretch reads EENLGIDKR. The chain crosses the membrane as a helical span at residues 385–411; sequence VTRFVLPVGATINMDGTALYEAVAAIF. Na(+) contacts are provided by Gly-393, Thr-395, and Asn-397. Thr-401 serves as a coordination point for L-aspartate. Residues 412–424 are Extracellular-facing; it reads IAQMNGVVLDGGQ. An intramembrane region (discontinuously helical) is located at residues 425-458; sequence IVTVSLTATLASVGAASIPSAGLVTMLLILTAVG. L-aspartate is bound at residue 442 to 446; that stretch reads IPSAG. Topologically, residues 459–471 are extracellular; it reads LPTEDISLLVAVD. A helical transmembrane segment spans residues 472-493; the sequence is WLLDRMRTSVNVVGDSFGAGIV. L-aspartate-binding residues include Asp-475 and Asn-482. Residues Asn-482 and Asp-486 each contribute to the Na(+) site. The Cytoplasmic segment spans residues 494-574; it reads YHLSKSELDT…VEEEPWKREK (81 aa). Ser-506, Ser-521, Ser-532, and Ser-534 each carry phosphoserine. Tyr-539 carries the post-translational modification Phosphotyrosine. Residues Ser-544, Ser-560, and Ser-564 each carry the phosphoserine modification.

This sequence belongs to the dicarboxylate/amino acid:cation symporter (DAACS) (TC 2.A.23) family. SLC1A2 subfamily. In terms of assembly, homotrimer. Isoform 3 can oligomerize with isoform 1. Interacts with AJUBA. In terms of processing, glycosylated. Palmitoylation at Cys-38 is not required for correct subcellular localization, but is important for glutamate uptake activity.

It is found in the cell membrane. The enzyme catalyses K(+)(in) + L-glutamate(out) + 3 Na(+)(out) + H(+)(out) = K(+)(out) + L-glutamate(in) + 3 Na(+)(in) + H(+)(in). It carries out the reaction K(+)(in) + L-aspartate(out) + 3 Na(+)(out) + H(+)(out) = K(+)(out) + L-aspartate(in) + 3 Na(+)(in) + H(+)(in). The catalysed reaction is D-aspartate(out) + K(+)(in) + 3 Na(+)(out) + H(+)(out) = D-aspartate(in) + K(+)(out) + 3 Na(+)(in) + H(+)(in). Functionally, sodium-dependent, high-affinity amino acid transporter that mediates the uptake of L-glutamate and also L-aspartate and D-aspartate. Functions as a symporter that transports one amino acid molecule together with two or three Na(+) ions and one proton, in parallel with the counter-transport of one K(+) ion. Mediates Cl(-) flux that is not coupled to amino acid transport; this avoids the accumulation of negative charges due to aspartate and Na(+) symport. Essential for the rapid removal of released glutamate from the synaptic cleft, and for terminating the postsynaptic action of glutamate. This is Excitatory amino acid transporter 2 from Homo sapiens (Human).